The following is a 124-amino-acid chain: Replication restart protein PriB (124 aa).

Positions 12–112 (IDNCLILSGS…VHAEHIEFID (101 aa)) constitute an SSB domain.

It belongs to the PriB family. As to quaternary structure, homodimer. Interacts with PriA and DnaT. Component of the replication restart primosome. Primosome assembly occurs via a 'hand-off' mechanism. PriA binds to replication forks, subsequently PriB then DnaT bind; DnaT then displaces ssDNA to generate the helicase loading substrate.

Functionally, involved in the restart of stalled replication forks, which reloads the replicative helicase on sites other than the origin of replication; the PriA-PriB pathway is the major replication restart pathway. During primosome assembly it facilitates complex formation between PriA and DnaT on DNA; stabilizes PriA on DNA. Stimulates the DNA unwinding activity of PriA helicase. The sequence is that of Replication restart protein PriB from Actinobacillus pleuropneumoniae serotype 5b (strain L20).